The chain runs to 288 residues: Probable branched-chain-amino-acid aminotransferase (288 aa).

Lysine 153 bears the N6-(pyridoxal phosphate)lysine mark.

It belongs to the class-IV pyridoxal-phosphate-dependent aminotransferase family. Pyridoxal 5'-phosphate serves as cofactor.

It catalyses the reaction L-leucine + 2-oxoglutarate = 4-methyl-2-oxopentanoate + L-glutamate. The enzyme catalyses L-isoleucine + 2-oxoglutarate = (S)-3-methyl-2-oxopentanoate + L-glutamate. It carries out the reaction L-valine + 2-oxoglutarate = 3-methyl-2-oxobutanoate + L-glutamate. Its pathway is amino-acid biosynthesis; L-isoleucine biosynthesis; L-isoleucine from 2-oxobutanoate: step 4/4. It functions in the pathway amino-acid biosynthesis; L-leucine biosynthesis; L-leucine from 3-methyl-2-oxobutanoate: step 4/4. It participates in amino-acid biosynthesis; L-valine biosynthesis; L-valine from pyruvate: step 4/4. Functionally, acts on leucine, isoleucine and valine. This is Probable branched-chain-amino-acid aminotransferase (ilvE) from Rickettsia typhi (strain ATCC VR-144 / Wilmington).